The following is a 205-amino-acid chain: dTTP/UTP pyrophosphatase (205 aa).

Residue Asp66 is the Proton acceptor of the active site.

It belongs to the Maf family. YhdE subfamily. A divalent metal cation is required as a cofactor.

The protein resides in the cytoplasm. The enzyme catalyses dTTP + H2O = dTMP + diphosphate + H(+). It catalyses the reaction UTP + H2O = UMP + diphosphate + H(+). Nucleoside triphosphate pyrophosphatase that hydrolyzes dTTP and UTP. May have a dual role in cell division arrest and in preventing the incorporation of modified nucleotides into cellular nucleic acids. The sequence is that of dTTP/UTP pyrophosphatase from Anaeromyxobacter sp. (strain Fw109-5).